Here is a 275-residue protein sequence, read N- to C-terminus: 4-diphosphocytidyl-2-C-methyl-D-erythritol kinase (275 aa).

K15 is a catalytic residue. 97–107 (PMGSGLGGGSS) contacts ATP. The active site involves D137.

Belongs to the GHMP kinase family. IspE subfamily.

It carries out the reaction 4-CDP-2-C-methyl-D-erythritol + ATP = 4-CDP-2-C-methyl-D-erythritol 2-phosphate + ADP + H(+). Its pathway is isoprenoid biosynthesis; isopentenyl diphosphate biosynthesis via DXP pathway; isopentenyl diphosphate from 1-deoxy-D-xylulose 5-phosphate: step 3/6. Its function is as follows. Catalyzes the phosphorylation of the position 2 hydroxy group of 4-diphosphocytidyl-2C-methyl-D-erythritol. This is 4-diphosphocytidyl-2-C-methyl-D-erythritol kinase from Pseudothermotoga lettingae (strain ATCC BAA-301 / DSM 14385 / NBRC 107922 / TMO) (Thermotoga lettingae).